A 369-amino-acid chain; its full sequence is Proton-coupled zinc antiporter SLC30A8 (369 aa).

Topologically, residues 1-79 are cytoplasmic; sequence MEFLERTYLV…AKWKLCSASA (79 aa). The interval 31–52 is disordered; sequence PVNKDQCPRERPEELESGGMYH. The segment covering 32 to 44 has biased composition (basic and acidic residues); that stretch reads VNKDQCPRERPEE. Residues His-52, Cys-53, and His-54 each coordinate Zn(2+). The HCH Motif; seals regulatory zinc-binding pocket signature appears at 52 to 54; that stretch reads HCH. Residues 80–100 form a helical membrane-spanning segment; the sequence is ICFIFMIAEVVGGHIAGSLAV. The Lumenal, vesicle portion of the chain corresponds to 101–103; sequence VTD. A helical membrane pass occupies residues 104-124; the sequence is AAHLLIDLTSFLLSLFSLWLS. Residues His-106, Asp-110, and His-137 each coordinate Zn(2+). Residues 125-140 are Cytoplasmic-facing; that stretch reads SKPPSKRLTFGWHRAE. A helical transmembrane segment spans residues 141 to 161; it reads ILGALLSILCIWVVTGVLVYL. Residues 162 to 175 are Lumenal, vesicle-facing; sequence ACERLLYPDYQIQA. Residues 176-196 traverse the membrane as a helical segment; the sequence is TVMIIVSSCAVAANIVLTVVL. Residues 197–217 are Cytoplasmic-facing; that stretch reads HQRCLGHNHKEVQANASVRAA. The helical transmembrane segment at 218–238 threads the bilayer; it reads FVHALGDLFQSISVLISALII. Residues His-220 and Asp-224 each coordinate Zn(2+). Over 239 to 245 the chain is Lumenal, vesicle; the sequence is YFKPEYK. A helical transmembrane segment spans residues 246 to 266; it reads IADPICTFIFSILVLASTITI. At 267 to 369 the chain is on the cytoplasmic side; that stretch reads LKDFSILLME…DCLFCEDPCD (103 aa). 6 residues coordinate Zn(2+): His-301, His-318, His-345, Glu-352, Cys-361, and Cys-364.

Belongs to the cation diffusion facilitator (CDF) transporter (TC 2.A.4) family. SLC30A subfamily. Homodimer. As to expression, in the endocrine pancreas, expressed in insulin-producing beta cells. Expressed at relatively high levels in subcutaneous fat tissue from lean persons; much lower levels in visceral fat, whether from lean or obese individuals, and in subcutaneous fat tissue from obese individuals. Expressed in peripheral blood mononuclear cells, including T-cells and B-cells, with great variation among individuals ranging from negative to strongly positive.

It is found in the cytoplasmic vesicle. The protein resides in the secretory vesicle membrane. It localises to the cell membrane. It carries out the reaction Zn(2+)(in) + 2 H(+)(out) = Zn(2+)(out) + 2 H(+)(in). In terms of biological role, proton-coupled zinc ion antiporter mediating the entry of zinc into the lumen of pancreatic beta cell secretory granules, thereby regulating insulin secretion. This chain is Proton-coupled zinc antiporter SLC30A8, found in Homo sapiens (Human).